Here is a 191-residue protein sequence, read N- to C-terminus: Peptide methionine sulfoxide reductase (191 aa).

2 disordered regions span residues Met-1 to Asn-20 and Glu-168 to Gly-191.

The protein belongs to the MsrA Met sulfoxide reductase family.

The catalysed reaction is L-methionyl-[protein] + [thioredoxin]-disulfide + H2O = L-methionyl-(S)-S-oxide-[protein] + [thioredoxin]-dithiol. The enzyme catalyses [thioredoxin]-disulfide + L-methionine + H2O = L-methionine (S)-S-oxide + [thioredoxin]-dithiol. Functionally, has an important function as a repair enzyme for proteins that have been inactivated by oxidation. Catalyzes the reversible oxidation-reduction of methionine sulfoxide in proteins to methionine. This is Peptide methionine sulfoxide reductase from Fragaria ananassa (Strawberry).